We begin with the raw amino-acid sequence, 283 residues long: Myeloid differentiation primary response protein MyD88-B (283 aa).

The 79-residue stretch at 27–105 folds into the Death domain; it reads RLCLYLNPNA…DILTDLAPLI (79 aa). The interval 106-143 is intermediate domain; that stretch reads EADCKKYLEKKHGPLPLQDDNVDSSEQYRITKSDDPYG. Positions 147–281 constitute a TIR domain; that stretch reads ETFDAFICCC…WFWDKLAKAL (135 aa).

It localises to the cytoplasm. Its function is as follows. Adapter protein involved in the Toll-like receptor and IL-1 receptor signaling pathway in the innate immune response. Activates expression of target genes in the Spemann organizer region during early embryonic development. Is required for normal axis formation. The chain is Myeloid differentiation primary response protein MyD88-B (myd88-b) from Xenopus laevis (African clawed frog).